The following is an 84-amino-acid chain: ATP synthase subunit c (84 aa).

A run of 2 helical transmembrane segments spans residues 9-29 and 54-74; these read IFGSVILLAVAALATAIGFSL and IVAGLLDAISMIAVGIALLFI.

It belongs to the ATPase C chain family. In terms of assembly, F-type ATPases have 2 components, F(1) - the catalytic core - and F(0) - the membrane proton channel. F(1) has five subunits: alpha(3), beta(3), gamma(1), delta(1), epsilon(1). F(0) has three main subunits: a(1), b(2) and c(10-14). The alpha and beta chains form an alternating ring which encloses part of the gamma chain. F(1) is attached to F(0) by a central stalk formed by the gamma and epsilon chains, while a peripheral stalk is formed by the delta and b chains.

The protein localises to the cell inner membrane. Functionally, f(1)F(0) ATP synthase produces ATP from ADP in the presence of a proton or sodium gradient. F-type ATPases consist of two structural domains, F(1) containing the extramembraneous catalytic core and F(0) containing the membrane proton channel, linked together by a central stalk and a peripheral stalk. During catalysis, ATP synthesis in the catalytic domain of F(1) is coupled via a rotary mechanism of the central stalk subunits to proton translocation. Key component of the F(0) channel; it plays a direct role in translocation across the membrane. A homomeric c-ring of between 10-14 subunits forms the central stalk rotor element with the F(1) delta and epsilon subunits. The sequence is that of ATP synthase subunit c from Histophilus somni (strain 129Pt) (Haemophilus somnus).